Reading from the N-terminus, the 192-residue chain is MKITDAAFYISAAALSGLPDLQIPEIVFAGRSNVGKSTLLNSLAGIKGLAKTSSTPGKTRLINFFLVNKAFFFVDLPGYGFAAVGHEQHEAWKKLLTTYIERRSAITLVVLLVDSRHPAMQSDREMIDYLTYLGKPYGIVLTKDDKLTQSQRIKARRVMESSALNAEFIVNYSSFSSKARLELLAHLAQYIR.

Positions 22-192 constitute an EngB-type G domain; the sequence is QIPEIVFAGR…LLAHLAQYIR (171 aa). Residues 30-37, 57-61, 75-78, 142-145, and 172-174 contribute to the GTP site; these read GRSNVGKS, GKTRL, DLPG, TKDD, and YSS. Mg(2+)-binding residues include Ser37 and Thr59.

It belongs to the TRAFAC class TrmE-Era-EngA-EngB-Septin-like GTPase superfamily. EngB GTPase family. Mg(2+) serves as cofactor.

Necessary for normal cell division and for the maintenance of normal septation. The protein is Probable GTP-binding protein EngB of Chlorobium phaeobacteroides (strain DSM 266 / SMG 266 / 2430).